A 390-amino-acid polypeptide reads, in one-letter code: NADH-quinone oxidoreductase subunit D (390 aa).

Belongs to the complex I 49 kDa subunit family. As to quaternary structure, NDH-1 is composed of 14 different subunits. Subunits NuoB, C, D, E, F, and G constitute the peripheral sector of the complex.

It localises to the cell membrane. It catalyses the reaction a quinone + NADH + 5 H(+)(in) = a quinol + NAD(+) + 4 H(+)(out). NDH-1 shuttles electrons from NADH, via FMN and iron-sulfur (Fe-S) centers, to quinones in the respiratory chain. The immediate electron acceptor for the enzyme in this species is believed to be ubiquinone. Couples the redox reaction to proton translocation (for every two electrons transferred, four hydrogen ions are translocated across the cytoplasmic membrane), and thus conserves the redox energy in a proton gradient. The protein is NADH-quinone oxidoreductase subunit D of Wolbachia pipientis wMel.